The chain runs to 62 residues: MAKSKSSRVGISLECTACRANANQPGVNRYRTTKNKKNTPNRLELKKFCPYCGHHTIHREIK.

This sequence belongs to the bacterial ribosomal protein bL33 family.

Its subcellular location is the plastid. It is found in the chloroplast. This is Large ribosomal subunit protein bL33c from Cyanidioschyzon merolae (strain NIES-3377 / 10D) (Unicellular red alga).